The sequence spans 37 residues: Large ribosomal subunit protein bL36 (37 aa).

The protein belongs to the bacterial ribosomal protein bL36 family.

This is Large ribosomal subunit protein bL36 from Idiomarina loihiensis (strain ATCC BAA-735 / DSM 15497 / L2-TR).